The primary structure comprises 176 residues: ATP-dependent protease subunit HslV (176 aa).

T2 is an active-site residue. Residues G157, C160, and T163 each contribute to the Na(+) site.

The protein belongs to the peptidase T1B family. HslV subfamily. A double ring-shaped homohexamer of HslV is capped on each side by a ring-shaped HslU homohexamer. The assembly of the HslU/HslV complex is dependent on binding of ATP.

The protein localises to the cytoplasm. It catalyses the reaction ATP-dependent cleavage of peptide bonds with broad specificity.. Its activity is regulated as follows. Allosterically activated by HslU binding. Functionally, protease subunit of a proteasome-like degradation complex believed to be a general protein degrading machinery. This Enterobacter sp. (strain 638) protein is ATP-dependent protease subunit HslV.